The sequence spans 240 residues: Large ribosomal subunit protein uL1c (240 aa).

Belongs to the universal ribosomal protein uL1 family. As to quaternary structure, part of the 50S ribosomal subunit.

The protein resides in the plastid. Its subcellular location is the chloroplast. Its function is as follows. Binds directly to 23S rRNA. Might be involved in E site tRNA release (Potential). This is Large ribosomal subunit protein uL1c (rpl1) from Cyanidium caldarium (Red alga).